Reading from the N-terminus, the 161-residue chain is Nucleotide-binding protein Plav_2177 (161 aa).

Belongs to the YajQ family.

Functionally, nucleotide-binding protein. The protein is Nucleotide-binding protein Plav_2177 of Parvibaculum lavamentivorans (strain DS-1 / DSM 13023 / NCIMB 13966).